The sequence spans 62 residues: Translational regulator CsrA 3 (62 aa).

This sequence belongs to the CsrA/RsmA family. As to quaternary structure, homodimer; the beta-strands of each monomer intercalate to form a hydrophobic core, while the alpha-helices form wings that extend away from the core.

Its subcellular location is the cytoplasm. Functionally, a key translational regulator that binds mRNA to regulate translation initiation and/or mRNA stability. Mediates global changes in gene expression, shifting from rapid growth to stress survival by linking envelope stress, the stringent response and the catabolite repression systems. Usually binds in the 5'-UTR; binding at or near the Shine-Dalgarno sequence prevents ribosome-binding, repressing translation, binding elsewhere in the 5'-UTR can activate translation and/or stabilize the mRNA. Its function is antagonized by small RNA(s). The polypeptide is Translational regulator CsrA 3 (Pseudomonas syringae pv. tomato (strain ATCC BAA-871 / DC3000)).